We begin with the raw amino-acid sequence, 644 residues long: DNA mismatch repair protein MutL (644 aa).

Disordered regions lie at residues 338 to 390 (RPNA…ERPA) and 416 to 445 (QPQEAAEEAAGTPAPPASSSPAMAETDDTQ). 2 stretches are compositionally biased toward low complexity: residues 349 to 366 (EATPSTDATTATAAEASA) and 416 to 427 (QPQEAAEEAAGT).

It belongs to the DNA mismatch repair MutL/HexB family.

This protein is involved in the repair of mismatches in DNA. It is required for dam-dependent methyl-directed DNA mismatch repair. May act as a 'molecular matchmaker', a protein that promotes the formation of a stable complex between two or more DNA-binding proteins in an ATP-dependent manner without itself being part of a final effector complex. The chain is DNA mismatch repair protein MutL from Chromohalobacter salexigens (strain ATCC BAA-138 / DSM 3043 / CIP 106854 / NCIMB 13768 / 1H11).